The sequence spans 58 residues: Small ribosomal subunit protein bS21 (58 aa).

The protein belongs to the bacterial ribosomal protein bS21 family.

This is Small ribosomal subunit protein bS21 from Latilactobacillus sakei subsp. sakei (strain 23K) (Lactobacillus sakei subsp. sakei).